The following is a 147-amino-acid chain: Protein phosphatase 1 regulatory subunit 14A (147 aa).

Residues 1-11 (MAAQRLGKRVL) are compositionally biased toward basic residues. The interval 1-37 (MAAQRLGKRVLSKLQSPSRARGPGGSPGGLQKRHARV) is disordered. Position 26 is a phosphoserine (Ser26). Residues 35–120 (ARVTVKYDRR…LLVKLRGLHK (86 aa)) form an inhibitory region. At Thr38 the chain carries Phosphothreonine. Residues 118 to 147 (LHKQPGLRQPSPSGDGSLSPRQDRARTAPP) form a disordered region. Residues 127-137 (PSPSGDGSLSP) show a composition bias toward polar residues. Ser128, Ser134, and Ser136 each carry phosphoserine. The segment covering 138 to 147 (RQDRARTAPP) has biased composition (basic and acidic residues).

It belongs to the PP1 inhibitor family. Phosphorylation of Thr-38 induces a conformation change. As to expression, detected in aorta smooth muscle and bladder.

It localises to the cytoplasm. Its function is as follows. Inhibitor of PPP1CA. Has over 1000-fold higher inhibitory activity when phosphorylated, creating a molecular switch for regulating the phosphorylation status of PPP1CA substrates and smooth muscle contraction. The protein is Protein phosphatase 1 regulatory subunit 14A (CPI17) of Sus scrofa (Pig).